A 91-amino-acid chain; its full sequence is Probable Fe(2+)-trafficking protein (91 aa).

It belongs to the Fe(2+)-trafficking protein family. Monomer.

In terms of biological role, could be a mediator in iron transactions between iron acquisition and iron-requiring processes, such as synthesis and/or repair of Fe-S clusters in biosynthetic enzymes. The polypeptide is Probable Fe(2+)-trafficking protein (Cronobacter sakazakii (strain ATCC BAA-894) (Enterobacter sakazakii)).